The following is a 951-amino-acid chain: Bifunctional glutamine synthetase adenylyltransferase/adenylyl-removing enzyme (951 aa).

An adenylyl removase region spans residues 1 to 440 (MLPLPSELQI…VFDDLIGDET (440 aa)). Residues 449-951 (HGLYKSLWQD…WLAANDANVS (503 aa)) are adenylyl transferase.

The protein belongs to the GlnE family. Mg(2+) serves as cofactor.

The enzyme catalyses [glutamine synthetase]-O(4)-(5'-adenylyl)-L-tyrosine + phosphate = [glutamine synthetase]-L-tyrosine + ADP. The catalysed reaction is [glutamine synthetase]-L-tyrosine + ATP = [glutamine synthetase]-O(4)-(5'-adenylyl)-L-tyrosine + diphosphate. Functionally, involved in the regulation of glutamine synthetase GlnA, a key enzyme in the process to assimilate ammonia. When cellular nitrogen levels are high, the C-terminal adenylyl transferase (AT) inactivates GlnA by covalent transfer of an adenylyl group from ATP to specific tyrosine residue of GlnA, thus reducing its activity. Conversely, when nitrogen levels are low, the N-terminal adenylyl removase (AR) activates GlnA by removing the adenylyl group by phosphorolysis, increasing its activity. The regulatory region of GlnE binds the signal transduction protein PII (GlnB) which indicates the nitrogen status of the cell. This chain is Bifunctional glutamine synthetase adenylyltransferase/adenylyl-removing enzyme, found in Yersinia pseudotuberculosis serotype O:1b (strain IP 31758).